A 164-amino-acid chain; its full sequence is UPF0304 protein YfbU (164 aa).

Belongs to the UPF0304 family.

The protein is UPF0304 protein YfbU (yfbU) of Escherichia coli O6:H1 (strain CFT073 / ATCC 700928 / UPEC).